Reading from the N-terminus, the 402-residue chain is Phosphoglycerate kinase (402 aa).

Substrate is bound by residues 21 to 23 (DFN), R36, 59 to 62 (HLGR), R118, and R151. ATP is bound by residues K201, G293, E324, and 353–356 (GGDS).

The protein belongs to the phosphoglycerate kinase family. Monomer.

It is found in the cytoplasm. It carries out the reaction (2R)-3-phosphoglycerate + ATP = (2R)-3-phospho-glyceroyl phosphate + ADP. The protein operates within carbohydrate degradation; glycolysis; pyruvate from D-glyceraldehyde 3-phosphate: step 2/5. The protein is Phosphoglycerate kinase of Thermosipho africanus (strain TCF52B).